A 163-amino-acid chain; its full sequence is Glycine cleavage system H-like protein gcvH5, mitochondrial (163 aa).

Residues 1 to 23 constitute a mitochondrion transit peptide; that stretch reads MFLFKTTNNLRKSLSNKFFCTRY. The Lipoyl-binding domain occupies 50 to 136; that stretch reads IGTLGLTENG…MSKGWLCKIK (87 aa).

It belongs to the GcvH family.

Its subcellular location is the mitochondrion. The protein is Glycine cleavage system H-like protein gcvH5, mitochondrial (gcvH5) of Dictyostelium discoideum (Social amoeba).